Reading from the N-terminus, the 294-residue chain is Bifunctional protein FolD (294 aa).

NADP(+) is bound by residues 166–168, Ser191, and Ile232; that span reads GRS.

This sequence belongs to the tetrahydrofolate dehydrogenase/cyclohydrolase family. Homodimer.

It carries out the reaction (6R)-5,10-methylene-5,6,7,8-tetrahydrofolate + NADP(+) = (6R)-5,10-methenyltetrahydrofolate + NADPH. It catalyses the reaction (6R)-5,10-methenyltetrahydrofolate + H2O = (6R)-10-formyltetrahydrofolate + H(+). It participates in one-carbon metabolism; tetrahydrofolate interconversion. Functionally, catalyzes the oxidation of 5,10-methylenetetrahydrofolate to 5,10-methenyltetrahydrofolate and then the hydrolysis of 5,10-methenyltetrahydrofolate to 10-formyltetrahydrofolate. The polypeptide is Bifunctional protein FolD (Bradyrhizobium diazoefficiens (strain JCM 10833 / BCRC 13528 / IAM 13628 / NBRC 14792 / USDA 110)).